Consider the following 258-residue polypeptide: Acetylglutamate kinase (258 aa).

Residues 41-42, Arg-63, and Asn-156 contribute to the substrate site; that span reads GG.

Belongs to the acetylglutamate kinase family. ArgB subfamily.

The protein resides in the cytoplasm. The enzyme catalyses N-acetyl-L-glutamate + ATP = N-acetyl-L-glutamyl 5-phosphate + ADP. It functions in the pathway amino-acid biosynthesis; L-arginine biosynthesis; N(2)-acetyl-L-ornithine from L-glutamate: step 2/4. Its function is as follows. Catalyzes the ATP-dependent phosphorylation of N-acetyl-L-glutamate. The sequence is that of Acetylglutamate kinase from Bacillus licheniformis (strain ATCC 14580 / DSM 13 / JCM 2505 / CCUG 7422 / NBRC 12200 / NCIMB 9375 / NCTC 10341 / NRRL NRS-1264 / Gibson 46).